The primary structure comprises 275 residues: Large ribosomal subunit protein uL2 (275 aa).

Positions 224–251 (VMNPVDHPHGGGEGRSPIGRKAPVTPWG) are disordered.

This sequence belongs to the universal ribosomal protein uL2 family. As to quaternary structure, part of the 50S ribosomal subunit. Forms a bridge to the 30S subunit in the 70S ribosome.

One of the primary rRNA binding proteins. Required for association of the 30S and 50S subunits to form the 70S ribosome, for tRNA binding and peptide bond formation. It has been suggested to have peptidyltransferase activity; this is somewhat controversial. Makes several contacts with the 16S rRNA in the 70S ribosome. This is Large ribosomal subunit protein uL2 from Heliobacterium modesticaldum (strain ATCC 51547 / Ice1).